The primary structure comprises 330 residues: Aspartate--ammonia ligase (330 aa).

This sequence belongs to the class-II aminoacyl-tRNA synthetase family. AsnA subfamily.

It is found in the cytoplasm. The catalysed reaction is L-aspartate + NH4(+) + ATP = L-asparagine + AMP + diphosphate + H(+). It participates in amino-acid biosynthesis; L-asparagine biosynthesis; L-asparagine from L-aspartate (ammonia route): step 1/1. This chain is Aspartate--ammonia ligase, found in Streptococcus pneumoniae serotype 2 (strain D39 / NCTC 7466).